We begin with the raw amino-acid sequence, 374 residues long: Fasciclin-like arabinogalactan protein CTB11 (374 aa).

The first 18 residues, Met-1–Ala-18, serve as a signal peptide directing secretion. 2 FAS1 domains span residues Gln-19–Met-171 and Leu-173–Leu-302. Residues Asn-52, Asn-72, Asn-120, Asn-132, and Asn-176 are each glycosylated (N-linked (GlcNAc...) asparagine). Residues Ile-328 to Leu-348 form a helical membrane-spanning segment.

The protein belongs to the fasciclin-like AGP family.

The protein resides in the membrane. The protein operates within mycotoxin biosynthesis. Fasciclin-like arabinogalactan protein; part of the gene cluster that mediates the biosynthesis of cercosporin, a light-activated, non-host-selective toxin. The perylenequinone chromophore of cercosporin absorbs light energy to attain an electronically-activated triplet state and produces active oxygen species such as the hydroxyl radical, superoxide, hydrogen peroxide or singlet oxygen upon reaction with oxygen molecules. These reactive oxygen species cause damage to various cellular components including lipids, proteins and nucleic acids. The first step of cercosporin biosynthesis is performed by the polyketide synthase CTB1 which catalyzes the formation of nor-toralactone. The starter unit acyltransferase (SAT) domain of CTB1 initiates polyketide extension by the selective utilization of acetyl-CoA, which is elongated to the heptaketide in the beta-ketoacyl synthase (KS) domain by successive condensations with six malonyl units introduced by the malonyl acyltransferase (MAT) domain. The product template (PT) domain catalyzes C4-C9 and C2-C11 aldol cyclizations and dehydrations to a trihydroxynaphthalene, which is thought to be delivered to the thioesterase (TE) domain for product release. The bifunctional enzyme CTB3 then methylates nor-toralactone to toralactone before conducting an unusual oxidative aromatic ring opening. The O-methyltransferase CTB2 further methylates the nascent OH-6 of the CBT3 product, blocking further oxidation at this site before the reductase CTB6 reduces the 2-oxopropyl ketone at position C7, giving naphthalene. The FAD-dependent monooxygenase CTB5 in concert with the multicopper oxidase CTB12 are responsible for homodimerization of naphthalene with CTB7 installing the dioxepine moiety, finally producing cercosporin. The fasciclin domain-containing protein CTB11 might act with CTB5 and CTB12 whereas the roles of CTB9 and CTB10 have still to be elucidated. The sequence is that of Fasciclin-like arabinogalactan protein CTB11 from Cercospora beticola (Sugarbeet leaf spot fungus).